The following is a 270-amino-acid chain: uncharacterized protein (270 aa).

The 70-residue stretch at 43–112 folds into the J domain; it reads CTANDIKRKY…REEYDRFGIH (70 aa). The segment at 239-270 is disordered; it reads EQSKQIPTQQKPSSLPPPERALPAPTMPTPSS. Polar residues predominate over residues 242–251; it reads KQIPTQQKPS. The span at 252–270 shows a compositional bias: pro residues; it reads SLPPPERALPAPTMPTPSS.

This is an uncharacterized protein from Schizosaccharomyces pombe (strain 972 / ATCC 24843) (Fission yeast).